Consider the following 630-residue polypeptide: Plastin-3 (630 aa).

EF-hand domains are found at residues 12–47 (DELDELKEAFAKVDLNSNGFICDYELHELFKEANMP) and 52–87 (KVREIIQKLMLDGDRNKDGKISFNEFVYIFQEVKSS). Ca(2+) is bound by residues Asp-25, Asn-27, Asn-29, Glu-36, Asp-65, Asn-67, Asp-69, Lys-71, and Glu-76. 2 actin-binding regions span residues 109–382 (TSEL…ALTK) and 383–627 (PENQ…GRGM). Calponin-homology (CH) domains are found at residues 123 to 239 (EEEK…KIGL) and 267 to 378 (LSPE…NKYP). A phosphoserine mark is found at Ser-268, Ser-293, Ser-326, and Ser-339. At Thr-391 the chain carries Phosphothreonine. Calponin-homology (CH) domains are found at residues 397-506 (TREE…RRYT) and 518-627 (KATD…GRGM).

In terms of assembly, monomer.

The protein localises to the cytoplasm. Functionally, actin-bundling protein. This chain is Plastin-3 (Pls3), found in Rattus norvegicus (Rat).